A 1198-amino-acid chain; its full sequence is MMMSSVAGQRKGPSDKSAAVSEQLIAQITAAVEAGNKNLLRKLGMGSYGILYGAQEKKAMELFDPEDVHNITSLWSSFKKTFTSSRDHGNLFFHLYGVMFFMVPHVHGGEGSVKISLCSSNDPTNPVLQEKVLYFSGGAQAVLMSPTITLPFVKRGPMFYYTMECLGTRAQIPCSVVAIWKQKIDIRSAIYSKQETMSWAIEALHRPQFFQDRQEAAQYISSVYSNATSSATDSVLPFVGAQLGDTKMNVPSEARMIRSSSLRVPMLKVQSKRFSSMEIPSTSTAHLLGTTRDETVIQEESRYEEEGDDGVLFPVKKAQGLNYSHVWDNLGIESFVDVELPENWDELSVRQQVAAAMIAFANKGVCLVPKHIINRDKHNIHLENITEHNYLVILERYGIVNAGSLARTENWYNLTLAQRVEELIYQRDDAYFMFGDNTNPYPPFDCYDGLTLKVRSELERVAKEQARQRFYKEAARAQVKNKVAQTSVEEIPSTSFATKVAMESGSVDSMKIAIQAEAANEAVRPNEVMFEFGQEMNNEGATELELQQPACVASNSFFNVGVFEFAWKKSSSVAAEVLSLALPAALFGKSKEMSMGSQMLRYYDAALIMYKVILYISGMGAISGQLALVWDECNVLNRKKEFINIASLYASKHRLVSASEQSSGEFCFTPTGIGKFVPLDPASGAYDLGSIRVFVTHPLASATELESIPCHIHLQCKVLSTNIMQPPRLRAQAQFGMKPDQTHFPRFPTNQVLLHYNWGVAASMGTTLVSIFSPSGIYESDGTLQPSLLGNIARNCKWWTGTCVFEICIEKTQFHSGSLAIGLGTLNTSMSTPHDILNMPHVICNLEMGRKFYFRCTITNWNGKNLLTTGRKSSLPRPKHMSHMRLFATVLKPLVSTSIHLDTVGVTVQLKCIEDLVLGGTVSVKPIYGHWTKGKNAVDFLFSEMDLSQRKEIEKLRKENVETFDEKGKKQPQVQVPLRDKFSYGAVQYFVMNWKDEERLLVLPCAPWSVRFPQGALVQEAITCPFIDWCSSFCYWSGSLEYTIIVHRVQTSNNIGGVLNITLDSSGYPFPLGISKGTYVVSAGGGAKWAFTYGMSDNIFSFVVHDDEFFPRRHTKARAIDPNASRIMTLQDRLGNLIINLPAKDVISSLEILVKPGPDFKLQLAQAPSANHEKHLGDMQTHTYLYTPDFSELRSFEN.

Post-translationally, specific enzymatic cleavages in vivo by the P1 encoded 3C-like protease yield mature proteins.

It is found in the host cell junction. The protein resides in the host plasmodesma. The protein localises to the virion. Its function is as follows. Transports viral genome to neighboring plant cells directly through plasmosdesmata, without any budding. The movement protein allows efficient cell to cell propagation, by bypassing the host cell wall barrier. Acts by forming a tubular structure at the host plasmodesmata, enlarging it enough to allow free passage of virion capsids. In terms of biological role, capsid proteins VP35, VP26, and VP23 form a capsid enclosing the viral positive strand RNA genome. Together they form an icosahedral capsid pseudo T=3 with a diameter of approximately 30 nm (Potential). This Tomato torrado virus (isolate Solanum lycopersicum/Spain/PRIToTV0301/-) (ToTV) protein is RNA2 polyprotein.